A 386-amino-acid chain; its full sequence is Magnesium transporter MRS2-7 (386 aa).

A run of 2 helical transmembrane segments spans residues 321-341 (LMLS…GIFG) and 355-375 (IFKW…VIIL). A Required for magnesium transport activity motif is present at residues 341 to 343 (GMN).

It belongs to the CorA metal ion transporter (MIT) (TC 1.A.35.5) family. Isoform 1 is expressed in the whole plant. Isoform 4 is expressed only in roots and flowers.

The protein localises to the endoplasmic reticulum membrane. Its function is as follows. Low-affinity magnesium transporter that mediates the influx of magnesium. In Arabidopsis thaliana (Mouse-ear cress), this protein is Magnesium transporter MRS2-7 (MRS2-7).